The primary structure comprises 140 residues: Large ribosomal subunit protein uL16 (140 aa).

Belongs to the universal ribosomal protein uL16 family. As to quaternary structure, part of the 50S ribosomal subunit.

In terms of biological role, binds 23S rRNA and is also seen to make contacts with the A and possibly P site tRNAs. This chain is Large ribosomal subunit protein uL16, found in Cytophaga hutchinsonii (strain ATCC 33406 / DSM 1761 / CIP 103989 / NBRC 15051 / NCIMB 9469 / D465).